Reading from the N-terminus, the 186-residue chain is Acetyltransferase PA5475 (186 aa).

The N-acetyltransferase domain occupies 31–186; it reads VLIRPLREED…STQVIHRLAL (156 aa). CoA-binding positions include 117–119, Gly125, Asn156, and 161–163; these read VTI and DLC.

Functionally, catalyzes the transfer of an acetyl group from acetyl coenzyme A (AcCoA) to an acceptor substrate and releases both CoA and the acetylated product. It prefers the antibiotic chloramphenicol. The protein is Acetyltransferase PA5475 of Pseudomonas aeruginosa (strain ATCC 15692 / DSM 22644 / CIP 104116 / JCM 14847 / LMG 12228 / 1C / PRS 101 / PAO1).